A 111-amino-acid polypeptide reads, in one-letter code: Aspartate 1-decarboxylase (111 aa).

The active-site Schiff-base intermediate with substrate; via pyruvic acid is S25. A Pyruvic acid (Ser) modification is found at S25. T57 lines the substrate pocket. Y58 acts as the Proton donor in catalysis. Residue 73–75 (GPA) participates in substrate binding.

This sequence belongs to the PanD family. As to quaternary structure, heterooctamer of four alpha and four beta subunits. The cofactor is pyruvate. Is synthesized initially as an inactive proenzyme, which is activated by self-cleavage at a specific serine bond to produce a beta-subunit with a hydroxyl group at its C-terminus and an alpha-subunit with a pyruvoyl group at its N-terminus.

Its subcellular location is the cytoplasm. The catalysed reaction is L-aspartate + H(+) = beta-alanine + CO2. The protein operates within cofactor biosynthesis; (R)-pantothenate biosynthesis; beta-alanine from L-aspartate: step 1/1. Its function is as follows. Catalyzes the pyruvoyl-dependent decarboxylation of aspartate to produce beta-alanine. This Coxiella burnetii (strain RSA 493 / Nine Mile phase I) protein is Aspartate 1-decarboxylase.